The following is a 225-amino-acid chain: Cytidylate kinase (225 aa).

11-19 contacts ATP; that stretch reads GPAAAGKST.

It belongs to the cytidylate kinase family. Type 1 subfamily.

Its subcellular location is the cytoplasm. It catalyses the reaction CMP + ATP = CDP + ADP. It carries out the reaction dCMP + ATP = dCDP + ADP. The chain is Cytidylate kinase from Anoxybacillus flavithermus (strain DSM 21510 / WK1).